The primary structure comprises 957 residues: Glycine dehydrogenase (decarboxylating) (957 aa).

N6-(pyridoxal phosphate)lysine is present on Lys708.

This sequence belongs to the GcvP family. The glycine cleavage system is composed of four proteins: P, T, L and H. It depends on pyridoxal 5'-phosphate as a cofactor.

It carries out the reaction N(6)-[(R)-lipoyl]-L-lysyl-[glycine-cleavage complex H protein] + glycine + H(+) = N(6)-[(R)-S(8)-aminomethyldihydrolipoyl]-L-lysyl-[glycine-cleavage complex H protein] + CO2. Its function is as follows. The glycine cleavage system catalyzes the degradation of glycine. The P protein binds the alpha-amino group of glycine through its pyridoxal phosphate cofactor; CO(2) is released and the remaining methylamine moiety is then transferred to the lipoamide cofactor of the H protein. This is Glycine dehydrogenase (decarboxylating) from Escherichia coli O1:K1 / APEC.